Consider the following 299-residue polypeptide: YjeF N-terminal domain-containing protein 3 (299 aa).

The region spanning 74–287 is the YjeF N-terminal domain; the sequence is AAALERELLE…DVRRKFALRL (214 aa).

In terms of assembly, interacts with APOA1. Binds to HDL. Expressed in theca cells in ovary and in Leydig cells in testis (at protein level). Also expressed in brain and mammary gland.

In terms of biological role, may accelerate cholesterol efflux from endothelial cells to high-density lipoprotein (HDL) and thereby regulates angiogenesis. May orchestrate hematopoietic stem and progenitor cell emergence from the hemogenic endothelium, a type of specialized endothelium manifesting hematopoietic potential. YJEFN3-mediated cholesterol efflux activates endothelial SREBF2, the master transcription factor for cholesterol biosynthesis, which in turn transactivates NOTCH and promotes hematopoietic stem and progenitor cell emergence. May play a role in spermiogenesis and oogenesis. This Homo sapiens (Human) protein is YjeF N-terminal domain-containing protein 3 (YJEFN3).